Here is an 891-residue protein sequence, read N- to C-terminus: Dynein axonemal intermediate chain 3 (891 aa).

Over residues 1–16 (MAPKQKKKSSRRKKSP) the composition is skewed to basic residues. The segment at 1–27 (MAPKQKKKSSRRKKSPKPILAASEDME) is disordered. WD repeat units lie at residues 395-435 (ESPD…DRIE), 477-533 (GHKR…PLTP), 670-709 (IHDG…GPLL), and 713-753 (CAPK…HEPA). The stretch at 817-861 (HLEYVEQRKKIREQEKKEMEQEMAKKKVKIYQKSKEQMEAELKMD) forms a coiled coil.

In terms of assembly, interacts with ACTR2; this interaction reduces binding of the Arp2/3 complex to the VCA domain of nucleation promoting factors. Part of the multisubunit axonemal dynein complex formed at least of two heavy chains and a number of intermediate and light chains. Found in a associated with the catalytic heavy chain DNAH2, the intermediate chain DNAI4, and the light chain DYNLT1.

It is found in the cytoplasm. Acts as a negative regulator of cell migration, invasion, and metastasis downstream of p53/TP53, through inhibition of Arp2/3 complex-mediated actin polymerization. Via its association with the multisubunit axonemal dynein complex, is potentially involved in the regulation of cilia function. May play a role in osteogenesis of dental tissue-derived mesenchymal stem cells. This Macaca fascicularis (Crab-eating macaque) protein is Dynein axonemal intermediate chain 3 (DNAI3).